Reading from the N-terminus, the 89-residue chain is MAISTELKAEIVKDYQRAEGDTGSPEVQVALLTARINDLTPHFKANTKDHHSRRGLLKMVSRRRKLLDYLKRTDAEAYRALITRLGLRK.

The protein belongs to the universal ribosomal protein uS15 family. Part of the 30S ribosomal subunit. Forms a bridge to the 50S subunit in the 70S ribosome, contacting the 23S rRNA.

One of the primary rRNA binding proteins, it binds directly to 16S rRNA where it helps nucleate assembly of the platform of the 30S subunit by binding and bridging several RNA helices of the 16S rRNA. Its function is as follows. Forms an intersubunit bridge (bridge B4) with the 23S rRNA of the 50S subunit in the ribosome. The chain is Small ribosomal subunit protein uS15 from Laribacter hongkongensis (strain HLHK9).